The following is a 103-amino-acid chain: Large ribosomal subunit protein bL21 (103 aa).

Belongs to the bacterial ribosomal protein bL21 family. Part of the 50S ribosomal subunit. Contacts protein L20.

Functionally, this protein binds to 23S rRNA in the presence of protein L20. In Rhodococcus erythropolis (strain PR4 / NBRC 100887), this protein is Large ribosomal subunit protein bL21.